Consider the following 549-residue polypeptide: Fumarate hydratase 1, mitochondrial (549 aa).

Cysteine 114 is a [4Fe-4S] cluster binding site. (S)-malate is bound by residues 115–116 (QD), arginine 154, glycine 197, and 200–206 (NKSFLLQ). [4Fe-4S] cluster contacts are provided by cysteine 233 and cysteine 328. Residues arginine 404, 450–454 (TTAGR), and lysine 474 contribute to the (S)-malate site.

This sequence belongs to the class-I fumarase family. In terms of assembly, homodimer. Requires [4Fe-4S] cluster as cofactor.

Its subcellular location is the mitochondrion. The catalysed reaction is (S)-malate = fumarate + H2O. The protein operates within carbohydrate metabolism; tricarboxylic acid cycle; (S)-malate from fumarate: step 1/1. With respect to regulation, specifically and competitively inhibited by 2-thiomalate, which coordinates with the catalytic [4Fe-4S] cluster. In terms of biological role, catalyzes the reversible hydration of fumarate to (S)-malate. Catalyzes the hydration of fumarate to L-malate in the tricarboxylic acid (TCA) cycle to facilitate a transition step in the production of energy in the form of NADH. This is Fumarate hydratase 1, mitochondrial from Leishmania major.